The sequence spans 141 residues: Large ribosomal subunit protein uL11 (141 aa).

It belongs to the universal ribosomal protein uL11 family. In terms of assembly, part of the ribosomal stalk of the 50S ribosomal subunit. Interacts with L10 and the large rRNA to form the base of the stalk. L10 forms an elongated spine to which L12 dimers bind in a sequential fashion forming a multimeric L10(L12)X complex. Post-translationally, one or more lysine residues are methylated.

In terms of biological role, forms part of the ribosomal stalk which helps the ribosome interact with GTP-bound translation factors. The chain is Large ribosomal subunit protein uL11 from Thermotoga neapolitana (strain ATCC 49049 / DSM 4359 / NBRC 107923 / NS-E).